The primary structure comprises 413 residues: Isobutyryl-CoA dehydrogenase, mitochondrial (413 aa).

Residues 1-20 (MAMLRSGYRRFGCLRAALKS) constitute a mitochondrion transit peptide. An N6-acetyllysine; alternate modification is found at K48. An N6-succinyllysine; alternate modification is found at K48. Residues 156 to 165 (YCLTEPGSGS) and 189 to 191 (FIS) contribute to the FAD site. S165 is a binding site for substrate. K211 carries the N6-succinyllysine modification. N6-acetyllysine is present on K229. K269 carries the post-translational modification N6-succinyllysine. 272–275 (NGGR) serves as a coordination point for substrate. FAD is bound by residues R300, 310–311 (SQ), and 369–373 (QMHGG). The active-site Proton acceptor is E396. FAD is bound at residue 398-400 (SNE). R408 serves as a coordination point for substrate.

The protein belongs to the acyl-CoA dehydrogenase family. As to quaternary structure, homotetramer, formed by a dimer of dimers. It depends on FAD as a cofactor.

It is found in the mitochondrion. The enzyme catalyses 2-methylpropanoyl-CoA + oxidized [electron-transfer flavoprotein] + H(+) = 2-methylpropenoyl-CoA + reduced [electron-transfer flavoprotein]. The catalysed reaction is (2S)-2-methylbutanoyl-CoA + oxidized [electron-transfer flavoprotein] + H(+) = (2E)-2-methylbut-2-enoyl-CoA + reduced [electron-transfer flavoprotein]. It carries out the reaction propanoyl-CoA + oxidized [electron-transfer flavoprotein] + H(+) = acryloyl-CoA + reduced [electron-transfer flavoprotein]. The protein operates within amino-acid degradation; L-valine degradation. Functionally, isobutyryl-CoA dehydrogenase which catalyzes the conversion of 2-methylpropanoyl-CoA to (2E)-2-methylpropenoyl-CoA in the valine catabolic pathway. To a lesser extent, also able to catalyze the oxidation of (2S)-2-methylbutanoyl-CoA. This is Isobutyryl-CoA dehydrogenase, mitochondrial from Mus musculus (Mouse).